A 261-amino-acid polypeptide reads, in one-letter code: Maspardin (261 aa).

The 73-residue stretch at 87–159 folds into the AB hydrolase-1 domain; the sequence is FCDGFRKLLD…NSFWLMPAFM (73 aa). Serine 257 is modified (phosphoserine).

The protein belongs to the AB hydrolase superfamily. Interacts with CD4. Interacts with ALDH16A1.

It localises to the cytoplasm. In terms of biological role, may play a role as a negative regulatory factor in CD4-dependent T-cell activation. This Rattus norvegicus (Rat) protein is Maspardin (Spg21).